The primary structure comprises 160 residues: Nucleotide-binding protein CbuK_1936 (160 aa).

It belongs to the YajQ family.

Its function is as follows. Nucleotide-binding protein. In Coxiella burnetii (strain CbuK_Q154) (Coxiella burnetii (strain Q154)), this protein is Nucleotide-binding protein CbuK_1936.